Reading from the N-terminus, the 101-residue chain is NAD(P)H-quinone oxidoreductase subunit 4L, chloroplastic (101 aa).

3 consecutive transmembrane segments (helical) span residues 2–22, 32–52, and 64–84; these read ILDS…YGLI, MSLE…SNFI, and IFIM…ILAI.

Belongs to the complex I subunit 4L family. As to quaternary structure, NDH is composed of at least 16 different subunits, 5 of which are encoded in the nucleus.

The protein localises to the plastid. The protein resides in the chloroplast thylakoid membrane. The enzyme catalyses a plastoquinone + NADH + (n+1) H(+)(in) = a plastoquinol + NAD(+) + n H(+)(out). It catalyses the reaction a plastoquinone + NADPH + (n+1) H(+)(in) = a plastoquinol + NADP(+) + n H(+)(out). Its function is as follows. NDH shuttles electrons from NAD(P)H:plastoquinone, via FMN and iron-sulfur (Fe-S) centers, to quinones in the photosynthetic chain and possibly in a chloroplast respiratory chain. The immediate electron acceptor for the enzyme in this species is believed to be plastoquinone. Couples the redox reaction to proton translocation, and thus conserves the redox energy in a proton gradient. The protein is NAD(P)H-quinone oxidoreductase subunit 4L, chloroplastic of Chlorokybus atmophyticus (Soil alga).